Reading from the N-terminus, the 1068-residue chain is Tricorn protease homolog (1068 aa).

Residues 61–326 are six-bladed beta propeller; sequence MKAYYMYPDI…DSLTKLDINL (266 aa). The interval 338-686 is seven-bladed beta propeller; sequence VNVMEYMNEA…RKGGVIDLSR (349 aa). The tract at residues 692 to 762 is C-1; the sequence is EPEKEWRQML…RTSHSYETAY (71 aa). H756 (charge relay system) is an active-site residue. The tract at residues 771–864 is PDZ-like; it reads SVGGLGAEFE…RVTVKVLKDE (94 aa). The segment at 865–1068 is C-2; the sequence is RFLIYRYWVE…TAIELALKQL (204 aa). G927 is a binding site for substrate. The active-site Nucleophile is S974. The active-site Charge relay system is E1032.

Belongs to the peptidase S41B family.

It is found in the cytoplasm. Degrades oligopeptides in a sequential manner. The chain is Tricorn protease homolog (tri) from Saccharolobus solfataricus (strain ATCC 35092 / DSM 1617 / JCM 11322 / P2) (Sulfolobus solfataricus).